Consider the following 226-residue polypeptide: Ribonuclease 3 (226 aa).

In terms of domain architecture, RNase III spans 7–129 (LPRLCRTLGY…IIGAVYLDSD (123 aa)). E42 serves as a coordination point for Mg(2+). Residue D46 is part of the active site. D115 and E118 together coordinate Mg(2+). E118 is an active-site residue. The 71-residue stretch at 156 to 226 (DAKTLLQEHL…AAQVLELLKK (71 aa)) folds into the DRBM domain.

The protein belongs to the ribonuclease III family. Homodimer. Mg(2+) serves as cofactor.

Its subcellular location is the cytoplasm. The catalysed reaction is Endonucleolytic cleavage to 5'-phosphomonoester.. Functionally, digests double-stranded RNA. Involved in the processing of primary rRNA transcript to yield the immediate precursors to the large and small rRNAs (23S and 16S). Processes some mRNAs, and tRNAs when they are encoded in the rRNA operon. Processes pre-crRNA and tracrRNA of type II CRISPR loci if present in the organism. The protein is Ribonuclease 3 of Shewanella baltica (strain OS185).